The primary structure comprises 221 residues: Late protein I196L (221 aa).

3 tandem repeats follow at residues 28–48, 49–69, and 70–90. One copy of the 4; approximate repeat lies at 91–112; it reads SNYSMTAIPNNISDKEDYTYFS.

The protein belongs to the asfivirus I196L family.

The polypeptide is Late protein I196L (African swine fever virus (isolate Tick/Malawi/Lil 20-1/1983) (ASFV)).